The chain runs to 1466 residues: ABC transporter G family member 10 (1466 aa).

Residues 23-45 (NTPQYENNNNNNNNTSGNESPNI) are compositionally biased toward low complexity. The interval 23–47 (NTPQYENNNNNNNNTSGNESPNILN) is disordered. Residues 138–392 (VTIFNLFRPS…FLDLGFDCEP (255 aa)) enclose the ABC transporter 1 domain. Residues 497–724 (WGDRFALISK…NGSTMSYQDQ (228 aa)) enclose the ABC transmembrane type-2 1 domain. Helical transmembrane passes span 501 to 521 (FALISKYISIIVQTFVYASLF), 537 to 557 (AIYAAILFNAFVSAGELGLTF), 586 to 606 (IPLTAIQVTIFSVIVYFMYGL), 611 to 631 (GKFFIFLFTIFGSTLSMVAFF), 641 to 661 (LYVSQNILNVFILFMFTYGGY), and 767 to 787 (IITFLWWIFFVIINMIALELF). Residues 838–1082 (FTWNHIHYTV…LTSYFERNGV (245 aa)) form the ABC transporter 2 domain. 874 to 881 (GSSGAGKT) is an ATP binding site. The region spanning 1177–1399 (SYVYGIFTQA…LTCKEYFKPT (223 aa)) is the ABC transmembrane type-2 2 domain. A run of 6 helical transmembrane segments spans residues 1178-1198 (YVYGIFTQAAASGLIIGFTFW), 1214-1234 (IFEILFLGILYIFIAIPQFLI), 1253-1273 (FAISIVIVELPFVAVAGTICF), 1290-1310 (FYFYITFILFLFICVSLGQVV), 1319-1339 (LAQTILPLLLVMLFLFCGVLV), and 1440-1460 (YGILWAFFIFNIIMVVSFVYL).

It belongs to the ABC transporter superfamily. ABCG family. PDR (TC 3.A.1.205) subfamily.

Its subcellular location is the membrane. The sequence is that of ABC transporter G family member 10 (abcG10) from Dictyostelium discoideum (Social amoeba).